We begin with the raw amino-acid sequence, 29 residues long: Cliotide T18 (29 aa).

Residues 1–29 (GLPICGETCFTGTCYTPGCTCSYPVCKKN) constitute a cross-link (cyclopeptide (Gly-Asn)). 3 cysteine pairs are disulfide-bonded: Cys5/Cys19, Cys9/Cys21, and Cys14/Cys26.

In terms of processing, contains 3 disulfide bonds. Post-translationally, this is a cyclic peptide. As to expression, expressed in root nodules but not in seed.

In terms of biological role, probably participates in a plant defense mechanism. This Clitoria ternatea (Butterfly pea) protein is Cliotide T18.